The primary structure comprises 342 residues: Ferredoxin--NADP reductase (342 aa).

FAD-binding residues include Cys17, Asp36, Gln44, Tyr49, Ile89, Phe124, Asp289, and Thr330.

Belongs to the ferredoxin--NADP reductase type 2 family. In terms of assembly, homodimer. Requires FAD as cofactor.

The catalysed reaction is 2 reduced [2Fe-2S]-[ferredoxin] + NADP(+) + H(+) = 2 oxidized [2Fe-2S]-[ferredoxin] + NADPH. The chain is Ferredoxin--NADP reductase from Rhodopseudomonas palustris (strain HaA2).